Reading from the N-terminus, the 131-residue chain is Cuticle protein 79, isoform A (131 aa).

Repeat copies occupy residues 37–40 (AAPA), 45–48 (AAPA), and 53–56 (AAPA).

Component of the cuticle of migratory locust which contains more than 100 different structural proteins. The chain is Cuticle protein 79, isoform A from Locusta migratoria (Migratory locust).